A 381-amino-acid polypeptide reads, in one-letter code: 2-epi-5-epi-valiolone synthase (381 aa).

NAD(+) is bound by residues aspartate 50, 81–84 (EEAK), 114–118 (GIVLD), 138–139 (TS), lysine 151, lysine 160, and 178–181 (FLDT). Residue lysine 151 is part of the active site. A divalent metal cation is bound by residues glutamate 193, histidine 264, and histidine 280.

The protein belongs to the sugar phosphate cyclases superfamily. EEVS family. NAD(+) serves as cofactor. The cofactor is Co(2+).

The catalysed reaction is D-sedoheptulose 7-phosphate = 2-epi-5-epi-valiolone + phosphate. The protein operates within antibiotic biosynthesis. Catalyzes the cyclization of D-sedoheptulose 7-phosphate to 2-epi-5-epi-valiolone. Involved in cetoniacytone A biosynthesis. In Actinomyces sp, this protein is 2-epi-5-epi-valiolone synthase.